The chain runs to 481 residues: Glutamate--glyoxylate aminotransferase 1 (481 aa).

Lys-291 carries the N6-(pyridoxal phosphate)lysine modification. The Peroxisomal targeting signal motif lies at 479 to 481 (SKM).

The protein belongs to the class-I pyridoxal-phosphate-dependent aminotransferase family. Alanine aminotransferase subfamily. In terms of assembly, homodimer. Pyridoxal 5'-phosphate is required as a cofactor. In terms of processing, the N-terminus is blocked. Mostly expressed in leaves, and, to a lower extent, in shoots, stems, flowers, seedlings and green siliques.

It is found in the peroxisome. It catalyses the reaction L-alanine + 2-oxoglutarate = pyruvate + L-glutamate. The enzyme catalyses glyoxylate + L-alanine = glycine + pyruvate. It carries out the reaction glycine + 2-oxoglutarate = glyoxylate + L-glutamate. It functions in the pathway amino-acid biosynthesis; glycine biosynthesis; glycine from glyoxylate: step 1/1. Its pathway is photosynthesis; C4 acid pathway. It participates in amino-acid degradation; L-alanine degradation via transaminase pathway; pyruvate from L-alanine: step 1/1. In terms of biological role, catalyzes the glutamate:glyoxylate (GGT or GGAT), alanine:glyoxylate (AGT), alanine:2-oxoglutarate (AKT) and glutamate:pyruvate (GPT) aminotransferase reactions in peroxisomes. Required for abscisic acid (ABA)- and stress-mediated responses in an H(2)O(2)-dependent manner. Functions as a photorespiratory aminotransferase that modulates amino acid content during photorespiration (GGAT activity); promotes serine, glycine and citrulline metabolism in response to light. The chain is Glutamate--glyoxylate aminotransferase 1 (GGAT1) from Arabidopsis thaliana (Mouse-ear cress).